Here is a 482-residue protein sequence, read N- to C-terminus: ATP synthase subunit beta (482 aa).

167-174 (GGAGVGKT) is a binding site for ATP.

The protein belongs to the ATPase alpha/beta chains family. In terms of assembly, F-type ATPases have 2 components, CF(1) - the catalytic core - and CF(0) - the membrane proton channel. CF(1) has five subunits: alpha(3), beta(3), gamma(1), delta(1), epsilon(1). CF(0) has three main subunits: a(1), b(2) and c(9-12). The alpha and beta chains form an alternating ring which encloses part of the gamma chain. CF(1) is attached to CF(0) by a central stalk formed by the gamma and epsilon chains, while a peripheral stalk is formed by the delta and b chains.

It localises to the cell membrane. The catalysed reaction is ATP + H2O + 4 H(+)(in) = ADP + phosphate + 5 H(+)(out). Functionally, produces ATP from ADP in the presence of a proton gradient across the membrane. The catalytic sites are hosted primarily by the beta subunits. The chain is ATP synthase subunit beta from Corynebacterium aurimucosum (strain ATCC 700975 / DSM 44827 / CIP 107346 / CN-1) (Corynebacterium nigricans).